A 750-amino-acid chain; its full sequence is Polyribonucleotide nucleotidyltransferase (750 aa).

Residues Asp-519 and Asp-525 each contribute to the Mg(2+) site. In terms of domain architecture, KH spans 585-644 (PRVIAVKIPVDKIGEVIGPKGKMINQIQEDTGADISIEDDGTVYIGATNGPSADAARSAI). An S1 motif domain is found at 656–728 (GERYLGTVVK…DRGKLSLSPV (73 aa)). The interval 725-750 (LSPVVAEEEGAASEDAPAEAAEESAE) is disordered. Over residues 730–750 (AEEEGAASEDAPAEAAEESAE) the composition is skewed to acidic residues.

Belongs to the polyribonucleotide nucleotidyltransferase family. The cofactor is Mg(2+).

The protein localises to the cytoplasm. It catalyses the reaction RNA(n+1) + phosphate = RNA(n) + a ribonucleoside 5'-diphosphate. Its function is as follows. Involved in mRNA degradation. Catalyzes the phosphorolysis of single-stranded polyribonucleotides processively in the 3'- to 5'-direction. The polypeptide is Polyribonucleotide nucleotidyltransferase (Paenarthrobacter aurescens (strain TC1)).